We begin with the raw amino-acid sequence, 87 residues long: Small ribosomal subunit protein bS18 (87 aa).

A disordered region spans residues 1 to 21 (MRHKPTPPKGNKSLGNALASK).

Belongs to the bacterial ribosomal protein bS18 family. In terms of assembly, part of the 30S ribosomal subunit. Forms a tight heterodimer with protein bS6.

Functionally, binds as a heterodimer with protein bS6 to the central domain of the 16S rRNA, where it helps stabilize the platform of the 30S subunit. This is Small ribosomal subunit protein bS18 from Chlorobium phaeobacteroides (strain DSM 266 / SMG 266 / 2430).